We begin with the raw amino-acid sequence, 656 residues long: UvrABC system protein C (656 aa).

Residues 16–95 form the GIY-YIG domain; sequence TDPGVYRFRD…IKEYSPRFNV (80 aa). The region spanning 208-243 is the UVR domain; sequence GRFLRQLEAEMKQAAAAQEYERAARIRDDIQALRTV.

This sequence belongs to the UvrC family. In terms of assembly, interacts with UvrB in an incision complex.

Its subcellular location is the cytoplasm. In terms of biological role, the UvrABC repair system catalyzes the recognition and processing of DNA lesions. UvrC both incises the 5' and 3' sides of the lesion. The N-terminal half is responsible for the 3' incision and the C-terminal half is responsible for the 5' incision. The sequence is that of UvrABC system protein C from Thermobifida fusca (strain YX).